Consider the following 455-residue polypeptide: Chromosomal replication initiator protein DnaA (455 aa).

Residues 1-70 (MTNETWVQVR…RMRLTEAGSP (70 aa)) form a domain I, interacts with DnaA modulators region. Residues 70–113 (PVERLEFAVSNTPRAPLKEVKAAAPAASPARARPAPPEEDLRGA) form a domain II region. The segment at 87-109 (KEVKAAAPAASPARARPAPPEED) is disordered. Residues 91-102 (AAAPAASPARAR) show a composition bias toward low complexity. A domain III, AAA+ region region spans residues 114 to 335 (PLDARFTFDS…GALTRLFAFA (222 aa)). ATP is bound by residues G158, G160, K161, and T162. The segment at 336–455 (SLVGREITLD…LQLLRRLLQA (120 aa)) is domain IV, binds dsDNA.

The protein belongs to the DnaA family. Oligomerizes as a right-handed, spiral filament on DNA at oriC.

The protein resides in the cytoplasm. Plays an essential role in the initiation and regulation of chromosomal replication. ATP-DnaA binds to the origin of replication (oriC) to initiate formation of the DNA replication initiation complex once per cell cycle. Binds the DnaA box (a 9 base pair repeat at the origin) and separates the double-stranded (ds)DNA. Forms a right-handed helical filament on oriC DNA; dsDNA binds to the exterior of the filament while single-stranded (ss)DNA is stabiized in the filament's interior. The ATP-DnaA-oriC complex binds and stabilizes one strand of the AT-rich DNA unwinding element (DUE), permitting loading of DNA polymerase. After initiation quickly degrades to an ADP-DnaA complex that is not apt for DNA replication. Binds acidic phospholipids. The protein is Chromosomal replication initiator protein DnaA of Cereibacter sphaeroides (strain ATCC 17029 / ATH 2.4.9) (Rhodobacter sphaeroides).